The chain runs to 272 residues: Cytochrome c1 (272 aa).

Residues 1-24 form the signal peptide; that stretch reads MTTIVKRALVAAGMVLAIGGAAQA. Positions 61, 64, 65, and 200 each coordinate heme c. The helical transmembrane segment at 244-261 threads the bilayer; that stretch reads LGLKVLLFLGVLTAMLLA.

In terms of assembly, the main subunits of complex b-c1 are: cytochrome b, cytochrome c1 and the Rieske protein. In terms of processing, binds 1 heme c group covalently per subunit.

The protein localises to the cell membrane. Its function is as follows. Component of the ubiquinol-cytochrome c reductase complex (complex III or cytochrome b-c1 complex), which is a respiratory chain that generates an electrochemical potential coupled to ATP synthesis. The sequence is that of Cytochrome c1 (petC) from Rhodospirillum rubrum.